A 760-amino-acid polypeptide reads, in one-letter code: Serine/threonine-protein kinase dkf-1 (760 aa).

2 consecutive Phorbol-ester/DAG-type zinc fingers follow at residues 103–153 (PHVV…GIIV) and 194–244 (PHTL…PSNC). Residues 316–444 (KNLEGWMIHF…QFIKESLQPP (129 aa)) form the PH domain. A Protein kinase domain is found at 464 to 725 (VLSDKTLGSG…IEKCLEHGWL (262 aa)). ATP is bound by residues 470 to 478 (LGSGQFGTV) and lysine 493. Residue aspartate 589 is the Proton acceptor of the active site. Threonine 626 is subject to Phosphothreonine.

The protein belongs to the protein kinase superfamily. CAMK Ser/Thr protein kinase family. PKD subfamily. Mg(2+) serves as cofactor. Prolonged phosphorylation at Thr-626 results in ubiquitination and degradation.

The protein resides in the cytoplasm. Its subcellular location is the membrane. The catalysed reaction is L-seryl-[protein] + ATP = O-phospho-L-seryl-[protein] + ADP + H(+). It carries out the reaction L-threonyl-[protein] + ATP = O-phospho-L-threonyl-[protein] + ADP + H(+). Activated by DAG and phorbol esters. Phorbol-ester/DAG-type domain 1 binds phorbol ester with high affinity and mediates accumulation at the cell periphery. Phorbol-ester/DAG-type domain 2 binds phorbol ester with low affinity but may mediate initial contact, resulting in a conformational change allowing previously occluded domain 1 to anchor the kinase. Phosphorylation on Thr-626 is then also required for activation and may also result in a further conformational change. Its function is as follows. Converts transient diacylglycerol (DAG) signals into prolonged physiological effects, independently of PKC. Role in the regulation of growth and neuromuscular control of movement. Involved in immune response to S.aureus bacterium by activating transcription factor hlh-30 downstream of phospholipase plc-1. The protein is Serine/threonine-protein kinase dkf-1 of Caenorhabditis briggsae.